Consider the following 162-residue polypeptide: Probable chemoreceptor glutamine deamidase CheD (162 aa).

The protein belongs to the CheD family.

It carries out the reaction L-glutaminyl-[protein] + H2O = L-glutamyl-[protein] + NH4(+). Its function is as follows. Probably deamidates glutamine residues to glutamate on methyl-accepting chemotaxis receptors (MCPs), playing an important role in chemotaxis. The sequence is that of Probable chemoreceptor glutamine deamidase CheD from Clostridium botulinum (strain Alaska E43 / Type E3).